The chain runs to 300 residues: MPRSHDPSRVELLRQEGSTMNEKRVSISVEDIRGAVATWKTTSGAPITPYPLPQFFLQPPSSGGGSRNVGGGDGAAGNSKNGSMNSLRMQAYAKKTDDDVDLGHRGELDLSEKYNYDLSKAQLKASSRTSALLAGFAMVCLVELQYDDSTSKPLLIVLGVVTSLLVSVHLLALMMSTCILPYMEATGCTQDSPHLKLKFYIDLSWLFSTCIGLLLFLVEIGVIFYVKFTAVGYPTAGYITTAMLIPVGIVFVLFSYLIHKNRVSHSLGRFKDKVDTMKQFLDVEANLQKSTIAPSTIRDI.

Residues methionine 1 to arginine 128 lie on the Cytoplasmic side of the membrane. Residues glutamine 58–glycine 82 form a disordered region. Positions serine 62–alanine 75 are enriched in gly residues. The chain crosses the membrane as a helical span at residues threonine 129 to tyrosine 146. The Extracellular segment spans residues aspartate 147–proline 153. Residues leucine 154–methionine 174 traverse the membrane as a helical segment. At methionine 175–tryptophan 205 the chain is on the cytoplasmic side. The chain crosses the membrane as a helical span at residues leucine 206 to valine 226. Over lysine 227–glycine 237 the chain is Extracellular. The chain crosses the membrane as a helical span at residues tyrosine 238 to isoleucine 258. Over histidine 259–isoleucine 300 the chain is Cytoplasmic.

This sequence belongs to the Orai family.

It is found in the membrane. In terms of biological role, ca(2+) release-activated Ca(2+)-like (CRAC-like) channel subunit which mediates Ca(2+) influx and increase in Ca(2+)-selective current by synergy with the Ca(2+) sensor, stim-1. Required for Ca(2+) and IP3-dependent contractile activity of sheath cells and the spermatheca. Affects brood size and somatic cell function. The protein is Protein orai (orai-1) of Caenorhabditis briggsae.